A 448-amino-acid chain; its full sequence is Fibulin-5 (448 aa).

Residues 1–23 (MPGLKRILTVTILALWLPHPGNA) form the signal peptide. The EGF-like 1; calcium-binding domain occupies 42–82 (DIDECRTIPEACRGDMMCVNQNGGYLCIPRTNPVYRGPYSN). 17 cysteine pairs are disulfide-bonded: cysteine 46-cysteine 59, cysteine 53-cysteine 68, cysteine 131-cysteine 144, cysteine 138-cysteine 153, cysteine 155-cysteine 166, cysteine 172-cysteine 181, cysteine 177-cysteine 190, cysteine 192-cysteine 205, cysteine 211-cysteine 221, cysteine 217-cysteine 230, cysteine 232-cysteine 245, cysteine 251-cysteine 262, cysteine 258-cysteine 271, cysteine 273-cysteine 286, cysteine 292-cysteine 305, cysteine 299-cysteine 314, and cysteine 320-cysteine 332. Positions 54 to 56 (RGD) match the Cell attachment site motif. The 41-residue stretch at 127–167 (DVDECATDSHQCNPTQICINTEGGYTCSCTDGYWLLEGQCL) folds into the EGF-like 2; calcium-binding domain. Residues 168–206 (DIDECRYGYCQQLCANVPGSYSCTCNPGFTLNDDGRSCQ) form the EGF-like 3; calcium-binding domain. In terms of domain architecture, EGF-like 4; calcium-binding spans 207–246 (DVNECETENPCVQTCVNTYGSFICRCDPGYELEEDGIHCS). The interaction with LOXL1 stretch occupies residues 245–448 (CSDMDECSFS…LRIYVSQYPF (204 aa)). The 41-residue stretch at 247–287 (DMDECSFSEFLCQHECVNQPGSYFCSCPPGYVLLDDNRSCQ) folds into the EGF-like 5; calcium-binding domain. N-linked (GlcNAc...) asparagine glycosylation is found at asparagine 283 and asparagine 296. The 46-residue stretch at 288 to 333 (DINECEHRNHTCTSLQTCYNLQGGFKCIDPISCEEPYLLIGENRCM) folds into the EGF-like 6; calcium-binding domain.

The protein belongs to the fibulin family. As to quaternary structure, homodimer. Monomer, homodimerizes in presence of Ca(2+). Interacts with ELN. Interacts (via N-terminus) with the integrins ITGAV/ITGB3, ITGAV/ITGB5 and ITGA9/ITGB1. Interacts with FBN1 (via N-terminal domain). Forms a ternary complex with ELN and FBN1. Interacts with EFEMP2 with moderate affinity. Interacts with LOXL1. In terms of processing, N-glycosylated.

It is found in the secreted. The protein localises to the extracellular space. Its subcellular location is the extracellular matrix. Functionally, essential for elastic fiber formation, is involved in the assembly of continuous elastin (ELN) polymer and promotes the interaction of microfibrils and ELN. Stabilizes and organizes elastic fibers in the skin, lung and vasculature. Promotes adhesion of endothelial cells through interaction of integrins and the RGD motif. Vascular ligand for integrin receptors which may play a role in vascular development and remodeling. May act as an adapter that mediates the interaction between FBN1 and ELN. This chain is Fibulin-5 (Fbln5), found in Mus musculus (Mouse).